A 592-amino-acid chain; its full sequence is Aspartate--tRNA(Asp/Asn) ligase (592 aa).

Glu-182 contributes to the L-aspartate binding site. The tract at residues 206–209 is aspartate; it reads QIFK. Arg-228 lines the L-aspartate pocket. ATP-binding positions include 228 to 230 and Gln-237; that span reads RDE. Position 455 (His-455) interacts with L-aspartate. ATP is bound at residue Glu-489. Arg-496 serves as a coordination point for L-aspartate. 541–544 is an ATP binding site; sequence GLDR.

The protein belongs to the class-II aminoacyl-tRNA synthetase family. Type 1 subfamily. In terms of assembly, homodimer.

Its subcellular location is the cytoplasm. It catalyses the reaction tRNA(Asx) + L-aspartate + ATP = L-aspartyl-tRNA(Asx) + AMP + diphosphate. In terms of biological role, aspartyl-tRNA synthetase with relaxed tRNA specificity since it is able to aspartylate not only its cognate tRNA(Asp) but also tRNA(Asn). Reaction proceeds in two steps: L-aspartate is first activated by ATP to form Asp-AMP and then transferred to the acceptor end of tRNA(Asp/Asn). The chain is Aspartate--tRNA(Asp/Asn) ligase from Thermoanaerobacter pseudethanolicus (strain ATCC 33223 / 39E) (Clostridium thermohydrosulfuricum).